The primary structure comprises 353 residues: Protein-glutamate methylesterase/protein-glutamine glutaminase (353 aa).

The Response regulatory domain maps to 6-123; the sequence is RVLVIDDSAL…ARGLKAMLSE (118 aa). Asp-57 bears the 4-aspartylphosphate mark. The region spanning 159 to 351 is the CheB-type methylesterase domain; it reads AESTDKVIAI…PRIVDLLSER (193 aa). Residues Ser-171, His-197, and Asp-293 contribute to the active site.

It belongs to the CheB family. In terms of processing, phosphorylated by CheA. Phosphorylation of the N-terminal regulatory domain activates the methylesterase activity.

Its subcellular location is the cytoplasm. It catalyses the reaction [protein]-L-glutamate 5-O-methyl ester + H2O = L-glutamyl-[protein] + methanol + H(+). It carries out the reaction L-glutaminyl-[protein] + H2O = L-glutamyl-[protein] + NH4(+). In terms of biological role, involved in chemotaxis. Part of a chemotaxis signal transduction system that modulates chemotaxis in response to various stimuli. Catalyzes the demethylation of specific methylglutamate residues introduced into the chemoreceptors (methyl-accepting chemotaxis proteins or MCP) by CheR. Also mediates the irreversible deamidation of specific glutamine residues to glutamic acid. In Syntrophotalea carbinolica (strain DSM 2380 / NBRC 103641 / GraBd1) (Pelobacter carbinolicus), this protein is Protein-glutamate methylesterase/protein-glutamine glutaminase.